Reading from the N-terminus, the 465-residue chain is Purple acid phosphatase 2 (465 aa).

An N-terminal signal peptide occupies residues 1-32; sequence MGASRTGCYLLAVVLAAVMNAAIAGITSSFIR. N-linked (GlcNAc...) asparagine glycosylation is found at asparagine 110 and asparagine 138. Aspartate 164 contributes to the Fe cation binding site. A glycan (N-linked (GlcNAc...) asparagine) is linked at asparagine 172. 2 residues coordinate Fe cation: aspartate 193 and tyrosine 196. Mn(2+) is bound at residue aspartate 193. Residue asparagine 230 coordinates Mn(2+). Asparagine 230 is a binding site for substrate. Asparagine 303 carries N-linked (GlcNAc...) asparagine glycosylation. Histidine 315 lines the Mn(2+) pocket. Histidine 325 (proton donor) is an active-site residue. Residue histidine 352 participates in Mn(2+) binding. 352 to 354 contributes to the substrate binding site; the sequence is HVH. Histidine 354 is a Fe cation binding site. N-linked (GlcNAc...) asparagine glycosylation is found at asparagine 400 and asparagine 425.

Belongs to the metallophosphoesterase superfamily. Purple acid phosphatase family. In terms of assembly, homodimer; disulfide-linked. Requires Fe cation as cofactor. Mn(2+) serves as cofactor. The cofactor is Zn(2+). It depends on Cu(2+) as a cofactor. Mg(2+) is required as a cofactor.

The protein resides in the secreted. The catalysed reaction is a phosphate monoester + H2O = an alcohol + phosphate. The polypeptide is Purple acid phosphatase 2 (PAP2) (Ipomoea batatas (Sweet potato)).